The chain runs to 333 residues: Transmembrane protein I329L (333 aa).

The signal sequence occupies residues 1-31 (MLRVFIFFVFLGSGLTGRIKPQITCKYFISE). N-linked (GlcNAc...) asparagine; by host glycans are attached at residues asparagine 32, asparagine 39, asparagine 44, asparagine 76, asparagine 82, and asparagine 101. At 32–239 (NNTWYKYNVT…NTERYKSCYP (208 aa)) the chain is on the extracellular side. An LRR repeat occupies 112-133 (ELKFLDLRYNDLQVIEYNILRK). N-linked (GlcNAc...) asparagine; by host glycans are attached at residues asparagine 181, asparagine 185, and asparagine 219. An intrachain disulfide couples cysteine 195 to cysteine 237. Residues 240-260 (LVFISILCSCISFLFLFICLL) traverse the membrane as a helical segment. Topologically, residues 261–333 (RSICKKYSCT…EKKVSCSRRK (73 aa)) are cytoplasmic.

It belongs to the asfivirus I329L family. Highly glycosylated.

The protein resides in the host endoplasmic reticulum membrane. It localises to the host Golgi apparatus membrane. Viral TLR3 homolog that probably prevents TLR3 dimerization and subsequent induction of IFN. Inhibits dsRNA-stimulated activation of NF-kB and IRF3. This chain is Transmembrane protein I329L, found in Ornithodoros (relapsing fever ticks).